The chain runs to 270 residues: DNA packaging protein OPG160 (270 aa).

ATP is bound at residue 55-62 (VYNPDYDG).

Belongs to the orthopoxvirus OPG160 protein family. As to quaternary structure, interacts with protein OPG137.

Its function is as follows. Participates in viral DNA packaging and virion morphogenesis. This Homo sapiens (Human) protein is DNA packaging protein OPG160 (OPG160).